A 247-amino-acid chain; its full sequence is NAD(P)H-quinone oxidoreductase subunit K, chloroplastic (247 aa).

[4Fe-4S] cluster is bound by residues Cys61, Cys62, Cys126, and Cys157.

This sequence belongs to the complex I 20 kDa subunit family. As to quaternary structure, NDH is composed of at least 16 different subunits, 5 of which are encoded in the nucleus. [4Fe-4S] cluster is required as a cofactor.

The protein localises to the plastid. Its subcellular location is the chloroplast thylakoid membrane. The catalysed reaction is a plastoquinone + NADH + (n+1) H(+)(in) = a plastoquinol + NAD(+) + n H(+)(out). It carries out the reaction a plastoquinone + NADPH + (n+1) H(+)(in) = a plastoquinol + NADP(+) + n H(+)(out). In terms of biological role, NDH shuttles electrons from NAD(P)H:plastoquinone, via FMN and iron-sulfur (Fe-S) centers, to quinones in the photosynthetic chain and possibly in a chloroplast respiratory chain. The immediate electron acceptor for the enzyme in this species is believed to be plastoquinone. Couples the redox reaction to proton translocation, and thus conserves the redox energy in a proton gradient. The chain is NAD(P)H-quinone oxidoreductase subunit K, chloroplastic from Anthoceros angustus (Hornwort).